The following is a 549-amino-acid chain: Chaperonin GroEL (549 aa).

Residues 29 to 32 (TLGP), Lys50, 86 to 90 (DGTTT), Gly414, 477 to 479 (NAA), and Asp493 contribute to the ATP site.

The protein belongs to the chaperonin (HSP60) family. Forms a cylinder of 14 subunits composed of two heptameric rings stacked back-to-back. Interacts with the co-chaperonin GroES.

The protein resides in the cytoplasm. The enzyme catalyses ATP + H2O + a folded polypeptide = ADP + phosphate + an unfolded polypeptide.. Its function is as follows. Together with its co-chaperonin GroES, plays an essential role in assisting protein folding. The GroEL-GroES system forms a nano-cage that allows encapsulation of the non-native substrate proteins and provides a physical environment optimized to promote and accelerate protein folding. In Geotalea uraniireducens (strain Rf4) (Geobacter uraniireducens), this protein is Chaperonin GroEL.